We begin with the raw amino-acid sequence, 73 residues long: Exodeoxyribonuclease 7 small subunit (73 aa).

It belongs to the XseB family. In terms of assembly, heterooligomer composed of large and small subunits.

It localises to the cytoplasm. It carries out the reaction Exonucleolytic cleavage in either 5'- to 3'- or 3'- to 5'-direction to yield nucleoside 5'-phosphates.. Bidirectionally degrades single-stranded DNA into large acid-insoluble oligonucleotides, which are then degraded further into small acid-soluble oligonucleotides. The sequence is that of Exodeoxyribonuclease 7 small subunit from Streptococcus mutans serotype c (strain ATCC 700610 / UA159).